Reading from the N-terminus, the 391-residue chain is S-adenosylmethionine synthase (391 aa).

H19 is a binding site for ATP. D21 contacts Mg(2+). E47 contacts K(+). L-methionine is bound by residues E60 and Q103. A flexible loop region spans residues 103–113; it reads QSADIAQGVDR. ATP is bound by residues 168-170, 236-237, D245, 251-252, A268, and K272; these read DGK, RF, and RK. Residue D245 coordinates L-methionine. An L-methionine-binding site is contributed by K276.

This sequence belongs to the AdoMet synthase family. As to quaternary structure, homotetramer; dimer of dimers. Requires Mg(2+) as cofactor. It depends on K(+) as a cofactor.

The protein resides in the cytoplasm. It carries out the reaction L-methionine + ATP + H2O = S-adenosyl-L-methionine + phosphate + diphosphate. The protein operates within amino-acid biosynthesis; S-adenosyl-L-methionine biosynthesis; S-adenosyl-L-methionine from L-methionine: step 1/1. Catalyzes the formation of S-adenosylmethionine (AdoMet) from methionine and ATP. The overall synthetic reaction is composed of two sequential steps, AdoMet formation and the subsequent tripolyphosphate hydrolysis which occurs prior to release of AdoMet from the enzyme. This is S-adenosylmethionine synthase from Nitratidesulfovibrio vulgaris (strain ATCC 29579 / DSM 644 / CCUG 34227 / NCIMB 8303 / VKM B-1760 / Hildenborough) (Desulfovibrio vulgaris).